We begin with the raw amino-acid sequence, 356 residues long: Golgi-resident adenosine 3',5'-bisphosphate 3'-phosphatase (356 aa).

At Met1 the chain carries N-acetylmethionine. Over 1–12 the chain is Cytoplasmic; sequence MAPMGIRLSPLG. The helical transmembrane segment at 13-33 threads the bilayer; the sequence is VAVFFLLGLGVLYHLYSGFLA. Over 34 to 356 the chain is Lumenal; the sequence is GRFSLFGLGG…KLPDLEKSGH (323 aa). Residues 82–104 are disordered; sequence VRESNVLHEKSKGKTREGAEDKM. Residue Asp108 is the Proton acceptor of the active site. The Mg(2+) site is built by Glu131, Asp172, Leu174, and Asp175. The Proton acceptor role is filled by Thr177. Positions 240 and 243 each coordinate AMP. Residue Asn257 is glycosylated (N-linked (GlcNAc...) asparagine). 2 residues coordinate AMP: Gly266 and Lys270. Residue Asp298 coordinates Mg(2+).

Belongs to the inositol monophosphatase superfamily. The cofactor is Mg(2+). In terms of processing, contains N-linked glycan resistant to endoglycosydase H.

It is found in the golgi apparatus. The protein localises to the trans-Golgi network membrane. The catalysed reaction is adenosine 3',5'-bisphosphate + H2O = AMP + phosphate. It functions in the pathway sulfur metabolism. Strongly inhibited by lithium. Functionally, exhibits 3'-nucleotidase activity toward adenosine 3',5'-bisphosphate (PAP), namely hydrolyzes adenosine 3',5'-bisphosphate into adenosine 5'-monophosphate (AMP) and a phosphate. May play a role in the formation of skeletal elements derived through endochondral ossification, possibly by clearing adenosine 3',5'-bisphosphate produced by Golgi sulfotransferases during glycosaminoglycan sulfation. Has no activity toward 3'-phosphoadenosine 5'-phosphosulfate (PAPS) or inositol phosphate (IP) substrates including I(1)P, I(1,4)P2, I(1,3,4)P3, I(1,4,5)P3 and I(1,3,4,5)P4. This Rattus norvegicus (Rat) protein is Golgi-resident adenosine 3',5'-bisphosphate 3'-phosphatase (Bpnt2).